The primary structure comprises 244 residues: uncharacterized protein (244 aa).

Residues 5–244 (QLLLAHRGYS…ANKKFEIKIN (240 aa)) form the GP-PDE domain.

It to glycerophosphoryl diester phosphodiesterases (EC 3.1.4.46). This sequence to M.genitalium MG385.

This is an uncharacterized protein from Mycoplasma genitalium (strain ATCC 33530 / DSM 19775 / NCTC 10195 / G37) (Mycoplasmoides genitalium).